The primary structure comprises 457 residues: Siroheme synthase (457 aa).

Residues 1–204 form a precorrin-2 dehydrogenase /sirohydrochlorin ferrochelatase region; the sequence is MDHLPIFCQL…ADEKAVNATT (204 aa). Residues 22–23 and 43–44 contribute to the NAD(+) site; these read DV and LT. Ser-128 carries the phosphoserine modification. The uroporphyrinogen-III C-methyltransferase stretch occupies residues 216–457; the sequence is GEVVLVGAGP…RDKLNWFSNH (242 aa). Pro-225 lines the S-adenosyl-L-methionine pocket. The active-site Proton acceptor is the Asp-248. Lys-270 (proton donor) is an active-site residue. S-adenosyl-L-methionine-binding positions include 301–303, Ile-306, 331–332, Met-382, and Gly-411; these read GGD and TA.

In the N-terminal section; belongs to the precorrin-2 dehydrogenase / sirohydrochlorin ferrochelatase family. It in the C-terminal section; belongs to the precorrin methyltransferase family.

It carries out the reaction uroporphyrinogen III + 2 S-adenosyl-L-methionine = precorrin-2 + 2 S-adenosyl-L-homocysteine + H(+). The enzyme catalyses precorrin-2 + NAD(+) = sirohydrochlorin + NADH + 2 H(+). It catalyses the reaction siroheme + 2 H(+) = sirohydrochlorin + Fe(2+). It participates in cofactor biosynthesis; adenosylcobalamin biosynthesis; precorrin-2 from uroporphyrinogen III: step 1/1. The protein operates within cofactor biosynthesis; adenosylcobalamin biosynthesis; sirohydrochlorin from precorrin-2: step 1/1. Its pathway is porphyrin-containing compound metabolism; siroheme biosynthesis; precorrin-2 from uroporphyrinogen III: step 1/1. It functions in the pathway porphyrin-containing compound metabolism; siroheme biosynthesis; siroheme from sirohydrochlorin: step 1/1. It participates in porphyrin-containing compound metabolism; siroheme biosynthesis; sirohydrochlorin from precorrin-2: step 1/1. Its function is as follows. Multifunctional enzyme that catalyzes the SAM-dependent methylations of uroporphyrinogen III at position C-2 and C-7 to form precorrin-2 via precorrin-1. Then it catalyzes the NAD-dependent ring dehydrogenation of precorrin-2 to yield sirohydrochlorin. Finally, it catalyzes the ferrochelation of sirohydrochlorin to yield siroheme. The protein is Siroheme synthase of Salmonella typhi.